We begin with the raw amino-acid sequence, 272 residues long: DNA repair protein RecO (272 aa).

Belongs to the RecO family.

Involved in DNA repair and RecF pathway recombination. This Latilactobacillus sakei subsp. sakei (strain 23K) (Lactobacillus sakei subsp. sakei) protein is DNA repair protein RecO.